We begin with the raw amino-acid sequence, 317 residues long: Protein IRX15-LIKE (317 aa).

The helical transmembrane segment at 27–47 (LWLLAFVSFFTIAFLLTLLYT) threads the bilayer.

In terms of tissue distribution, expressed in roots, rosette leaves, stems and siliques. Expressed in the xylem.

The protein resides in the golgi apparatus membrane. In terms of biological role, required for xylan biosynthesis, but not directly involved in catalyzing the addition of sugars to the growing polymer. This Arabidopsis thaliana (Mouse-ear cress) protein is Protein IRX15-LIKE (IRX15-L).